Here is a 1047-residue protein sequence, read N- to C-terminus: uncharacterized protein (1047 aa).

At Lys17 the chain carries N6-acetyllysine. 2 disordered regions span residues 172–208 (PPCS…GSFS) and 236–283 (RNSK…PQAL). Ser208 bears the Phosphoserine mark. The segment covering 237–254 (NSKQAMSEGPSSPWTQLA) has biased composition (polar residues). Residues 268-283 (HYPPPHHPPPHPPQAL) are compositionally biased toward pro residues. Phosphoserine occurs at positions 299 and 391. At Thr397 the chain carries Phosphothreonine. Disordered stretches follow at residues 448–469 (EKLQ…DSPV), 482–504 (ECQS…PVID), 519–567 (PAPE…LRGS), 668–690 (PSTP…GPIG), 714–763 (VAVA…GDSL), 931–1004 (EAGA…TLKA), and 1021–1047 (PTWG…SHHL). Phosphoserine is present on residues Ser455, Ser496, and Ser497. Composition is skewed to low complexity over residues 729 to 741 (PARA…ARDP) and 751 to 762 (PAPASTSAPGDS). A phosphoserine mark is found at Ser936, Ser956, Ser988, and Ser996. The span at 978–996 (AAAGEESCGASPTPATSAS) shows a compositional bias: low complexity.

This is an uncharacterized protein from Homo sapiens (Human).